The primary structure comprises 31 residues: Cytochrome b6-f complex subunit 6 (31 aa).

A helical transmembrane segment spans residues I4 to G24.

Belongs to the PetL family. In terms of assembly, the 4 large subunits of the cytochrome b6-f complex are cytochrome b6, subunit IV (17 kDa polypeptide, PetD), cytochrome f and the Rieske protein, while the 4 small subunits are PetG, PetL, PetM and PetN. The complex functions as a dimer.

It is found in the plastid. Its subcellular location is the chloroplast thylakoid membrane. In terms of biological role, component of the cytochrome b6-f complex, which mediates electron transfer between photosystem II (PSII) and photosystem I (PSI), cyclic electron flow around PSI, and state transitions. PetL is important for photoautotrophic growth as well as for electron transfer efficiency and stability of the cytochrome b6-f complex. The chain is Cytochrome b6-f complex subunit 6 from Jasminum nudiflorum (Winter jasmine).